We begin with the raw amino-acid sequence, 146 residues long: Hemoglobin subunit beta (146 aa).

V1 is subject to N-acetylvaline. In terms of domain architecture, Globin spans 2–146 (HMTDAEKKLV…VANALAHKYH (145 aa)). T12 carries the post-translational modification Phosphothreonine. K59 bears the N6-acetyllysine mark. H63 is a heme b binding site. N6-acetyllysine is present on K82. H92 provides a ligand contact to heme b. C93 is subject to S-nitrosocysteine. K144 carries the post-translational modification N6-acetyllysine.

This sequence belongs to the globin family. As to quaternary structure, tetramer of two alpha and two different beta chains. Two external cysteine residues at beta-16 and beta-52 cause reversible polymerization to octamers and most likely irreversible formation of higher polymers. Red blood cells.

Involved in oxygen transport from the lung to the various peripheral tissues. The chain is Hemoglobin subunit beta (HBB) from Echinops telfairi (Lesser hedgehog tenrec).